Reading from the N-terminus, the 133-residue chain is Interleukin-5 (133 aa).

Positions 1–20 (MRRMLLHLSVLTLSCVWATA) are cleaved as a signal peptide. N-linked (GlcNAc...) asparagine glycosylation is found at N46, N75, and N89.

This sequence belongs to the IL-5 family. As to quaternary structure, homodimer; disulfide-linked. Interacts with IL5RA. Interacts with CSF2RB. Expressed in lymphoid cells, including spleen, thymus, lymph nodes and peripheral blood mononuclear cells.

The protein localises to the secreted. Its function is as follows. Homodimeric cytokine expressed predominantly by T-lymphocytes and NK cells that plays an important role in the survival, differentiation, and chemotaxis of eosinophils. Also acts on activated and resting B-cells to induce immunoglobulin production, growth, and differentiation. Mechanistically, exerts its biological effects through a receptor composed of IL5RA subunit and the cytokine receptor common subunit beta/CSF2RB. Binding to the receptor leads to activation of various kinases including LYN, SYK and JAK2 and thereby propagates signals through the RAS-MAPK and JAK-STAT5 pathways respectively. The polypeptide is Interleukin-5 (Il5) (Mus musculus (Mouse)).